Reading from the N-terminus, the 243-residue chain is Probable transcriptional regulator ycf27 (243 aa).

The Response regulatory domain occupies 7 to 120; sequence KILVVDDEAS…ELEARIRSVL (114 aa). Position 56 is a 4-aspartylphosphate (Asp-56). A DNA-binding region (H-T-H motif) is located at residues 76–94; the sequence is DVPIIMLTALGEVCDRITG. Residues 135 to 236 constitute a DNA-binding region (ompR/PhoB-type); sequence SGIISIGFLK…ARGTGYLFQR (102 aa).

It is found in the plastid. Its subcellular location is the chloroplast. Functionally, probable promoter-specific protein mediating the interaction between DNA and RNA polymerase. The protein is Probable transcriptional regulator ycf27 (ycf27) of Porphyra purpurea (Red seaweed).